The primary structure comprises 355 residues: UDP-N-acetylglucosamine--N-acetylmuramyl-(pentapeptide) pyrophosphoryl-undecaprenol N-acetylglucosamine transferase (355 aa).

UDP-N-acetyl-alpha-D-glucosamine is bound by residues 14–16, Asn-123, Arg-164, Ser-190, and Gln-284; that span reads TGG.

The protein belongs to the glycosyltransferase 28 family. MurG subfamily.

The protein localises to the cell inner membrane. It catalyses the reaction di-trans,octa-cis-undecaprenyl diphospho-N-acetyl-alpha-D-muramoyl-L-alanyl-D-glutamyl-meso-2,6-diaminopimeloyl-D-alanyl-D-alanine + UDP-N-acetyl-alpha-D-glucosamine = di-trans,octa-cis-undecaprenyl diphospho-[N-acetyl-alpha-D-glucosaminyl-(1-&gt;4)]-N-acetyl-alpha-D-muramoyl-L-alanyl-D-glutamyl-meso-2,6-diaminopimeloyl-D-alanyl-D-alanine + UDP + H(+). Its pathway is cell wall biogenesis; peptidoglycan biosynthesis. Its function is as follows. Cell wall formation. Catalyzes the transfer of a GlcNAc subunit on undecaprenyl-pyrophosphoryl-MurNAc-pentapeptide (lipid intermediate I) to form undecaprenyl-pyrophosphoryl-MurNAc-(pentapeptide)GlcNAc (lipid intermediate II). The polypeptide is UDP-N-acetylglucosamine--N-acetylmuramyl-(pentapeptide) pyrophosphoryl-undecaprenol N-acetylglucosamine transferase (Synechocystis sp. (strain ATCC 27184 / PCC 6803 / Kazusa)).